Reading from the N-terminus, the 1372-residue chain is DNA-directed RNA polymerase subunit beta (1372 aa).

The protein belongs to the RNA polymerase beta chain family. In terms of assembly, the RNAP catalytic core consists of 2 alpha, 1 beta, 1 beta' and 1 omega subunit. When a sigma factor is associated with the core the holoenzyme is formed, which can initiate transcription.

The catalysed reaction is RNA(n) + a ribonucleoside 5'-triphosphate = RNA(n+1) + diphosphate. Functionally, DNA-dependent RNA polymerase catalyzes the transcription of DNA into RNA using the four ribonucleoside triphosphates as substrates. In Bradyrhizobium sp. (strain ORS 278), this protein is DNA-directed RNA polymerase subunit beta.